We begin with the raw amino-acid sequence, 1309 residues long: Nuclear pore complex protein NUP1 (1309 aa).

Disordered regions lie at residues 1 to 58 (MASA…GGGW), 83 to 118 (RKRL…HKED), 173 to 210 (AADS…GSMN), 266 to 296 (RTPF…VTPR), 329 to 348 (SKWE…SGLK), 384 to 417 (ESPL…NLVP), 467 to 538 (LGNL…EEHP), 594 to 617 (SEAM…NGSL), and 635 to 680 (SNMA…VFPN). Residues 2–677 (ASAARGESSN…LEEPKKPAAV (676 aa)) form a 25 X 2 AA repeats of F-G region. The span at 22–32 (KFRKPTARRSQ) shows a compositional bias: basic residues. Gly residues predominate over residues 47–58 (GLGGGDVRGGGW). Residues 91–101 (TPLQSPEQQKQ) are compositionally biased toward polar residues. Over residues 195 to 204 (PSHERDRTHP) the composition is skewed to basic and acidic residues. A compositionally biased stretch (polar residues) spans 268-283 (PFPQKSPTMSLVTKPS). Positions 396 to 405 (KTTHTSKDSA) are enriched in basic and acidic residues. 2 stretches are compositionally biased toward polar residues: residues 597-617 (MPST…NGSL) and 635-659 (SNMA…SGKP). Positions 660–673 (TSEEKRIPLEEPKK) are enriched in basic and acidic residues. The stretch at 711 to 712 (FG) is repeat 1. A disordered region spans residues 719–865 (KPTESKKTFS…VKNATFGNTS (147 aa)). 2 stretches are compositionally biased toward low complexity: residues 728–741 (SNSA…TSAA) and 767–783 (SSPS…SDNS). The span at 789-803 (STVQSFAATHNSSSI) shows a compositional bias: polar residues. Repeat 2 spans residues 804 to 805 (FG). Low complexity predominate over residues 809–827 (TSNDSNSQSTSASPLSSTS). Tandem repeats lie at residues 831–832 (FG), 861–862 (FG), 869–870 (FG), 883–884 (FG), 898–899 (FG), 927–928 (FG), 956–957 (FG), 983–984 (FG), 1004–1005 (FG), 1029–1030 (FG), 1038–1039 (FG), and 1053–1054 (FG). Over residues 1004 to 1023 (FGAGNAQTGNTGSGTTTSTQ) the composition is skewed to low complexity. Positions 1004–1028 (FGAGNAQTGNTGSGTTTSTQSIPFQ) are disordered. Low complexity predominate over residues 1068 to 1086 (TPQLSSTNSSASSSSTMSS). Residues 1068–1105 (TPQLSSTNSSASSSSTMSSPLFGTSWQAPNSSPNSGPV) are disordered. Copy 15 of the repeat occupies 1089 to 1090 (FG). Low complexity predominate over residues 1096–1105 (PNSSPNSGPV). 10 repeat units span residues 1121-1122 (FG), 1137-1138 (FG), 1151-1152 (FG), 1153-1154 (FG), 1166-1167 (FG), 1177-1178 (FG), 1186-1187 (FG), 1224-1225 (FG), 1238-1239 (FG), and 1255-1256 (FG). The segment at 1278 to 1309 (FQGGGSFSLGSTGGGDKSGRRIFKAKKSTRKK) is disordered. The segment covering 1279 to 1293 (QGGGSFSLGSTGGGD) has biased composition (gly residues). The segment covering 1297–1309 (RRIFKAKKSTRKK) has biased composition (basic residues).

As to quaternary structure, part of the nuclear pore complex (NPC). The NPC has an eight-fold symmetrical structure comprising a central transport channel and two rings, the cytoplasmic and nuclear rings, to which eight filaments are attached. The cytoplasmic filaments have loose ends, while the nuclear filaments are joined in a distal ring, forming a nuclear basket. NPCs are highly dynamic in configuration and composition, and can be devided in 3 subcomplexes, the NUP62 subcomplex, the NUP107-160 subcomplex and the NUP93 subcomplex, containing approximately 30 different nucleoporin proteins. Interacts with EER5, anchoring the TREX-2 complex on the nuclear pore complex. Interacts with UCH1 and UCH2.

It is found in the nucleus envelope. It localises to the nucleus. Its subcellular location is the nuclear pore complex. The protein resides in the cytoplasm. The protein localises to the cytosol. Nucleoporin required for nuclear mRNA export. Functions as an adapter and/or regulator molecule in the periphery of the nuclear pore complex (NPC). May interact with importin proteins and mediate active nucleocytoplasmic transport through the NPC. Involved in regulation of nuclear morphology. The polypeptide is Nuclear pore complex protein NUP1 (Arabidopsis thaliana (Mouse-ear cress)).